Reading from the N-terminus, the 94-residue chain is Integration host factor subunit beta (94 aa).

It belongs to the bacterial histone-like protein family. Heterodimer of an alpha and a beta chain.

In terms of biological role, this protein is one of the two subunits of integration host factor, a specific DNA-binding protein that functions in genetic recombination as well as in transcriptional and translational control. This is Integration host factor subunit beta from Roseobacter denitrificans (strain ATCC 33942 / OCh 114) (Erythrobacter sp. (strain OCh 114)).